A 167-amino-acid polypeptide reads, in one-letter code: Cytochrome c-type biogenesis protein CcmE (167 aa).

The Cytoplasmic segment spans residues 1–7 (MTRKTRR). A helical; Signal-anchor for type II membrane protein membrane pass occupies residues 8–28 (LWIVIACLACVGSAAALTLRA). Residues 29–167 (FSSNIVFFMA…DTMTAKKAGG (139 aa)) lie on the Periplasmic side of the membrane. The heme site is built by histidine 125 and tyrosine 129. Over residues 141–150 (TGKWDPRFGK) the composition is skewed to basic and acidic residues. The interval 141–167 (TGKWDPRFGKAPDASSWDTMTAKKAGG) is disordered.

The protein belongs to the CcmE/CycJ family.

The protein resides in the cell inner membrane. Its function is as follows. Heme chaperone required for the biogenesis of c-type cytochromes. Transiently binds heme delivered by CcmC and transfers the heme to apo-cytochromes in a process facilitated by CcmF and CcmH. This is Cytochrome c-type biogenesis protein CcmE from Gluconobacter oxydans (strain 621H) (Gluconobacter suboxydans).